A 526-amino-acid chain; its full sequence is Radial spoke head protein 6 homolog A (526 aa).

Disordered regions lie at residues 180 to 231 (EGED…EENG), 371 to 411 (VKSE…DAEI), and 469 to 526 (PPAP…EEDD). Composition is skewed to acidic residues over residues 181–212 (GEDDEAEEGGEEEEKGEVEDDVEEEENEEAED) and 374–395 (EEEEDEEEAEEEEKEEENEPEP). Basic and acidic residues predominate over residues 497–506 (QALKAAKEEA). Residues 507–526 (EAAAEEMEEEEDEEEEEEDD) are compositionally biased toward acidic residues.

It belongs to the flagellar radial spoke RSP4/6 family. As to quaternary structure, component of sperm axonemal radial spoke complexes.

It localises to the cytoplasm. The protein localises to the cytoskeleton. The protein resides in the flagellum axoneme. Its function is as follows. Functions as part of radial spoke complexes in the axoneme of sperm flagella that play an important part in motility. The triple radial spokes (RS1, RS2 and RS3) are required to modulate beating of the sperm flagellum. This is Radial spoke head protein 6 homolog A (rsph6a) from Xenopus tropicalis (Western clawed frog).